A 207-amino-acid polypeptide reads, in one-letter code: Thiamine-phosphate synthase (207 aa).

Residues 36–40 (QLRIK) and Asp-68 contribute to the 4-amino-2-methyl-5-(diphosphooxymethyl)pyrimidine site. Mg(2+)-binding residues include Asp-69 and Asp-88. Residue Ser-106 participates in 4-amino-2-methyl-5-(diphosphooxymethyl)pyrimidine binding. A 2-[(2R,5Z)-2-carboxy-4-methylthiazol-5(2H)-ylidene]ethyl phosphate-binding site is contributed by 132 to 134 (TQT). Lys-135 contributes to the 4-amino-2-methyl-5-(diphosphooxymethyl)pyrimidine binding site. Residues Gly-162 and 182 to 183 (VS) contribute to the 2-[(2R,5Z)-2-carboxy-4-methylthiazol-5(2H)-ylidene]ethyl phosphate site.

Belongs to the thiamine-phosphate synthase family. Requires Mg(2+) as cofactor.

The catalysed reaction is 2-[(2R,5Z)-2-carboxy-4-methylthiazol-5(2H)-ylidene]ethyl phosphate + 4-amino-2-methyl-5-(diphosphooxymethyl)pyrimidine + 2 H(+) = thiamine phosphate + CO2 + diphosphate. It carries out the reaction 2-(2-carboxy-4-methylthiazol-5-yl)ethyl phosphate + 4-amino-2-methyl-5-(diphosphooxymethyl)pyrimidine + 2 H(+) = thiamine phosphate + CO2 + diphosphate. It catalyses the reaction 4-methyl-5-(2-phosphooxyethyl)-thiazole + 4-amino-2-methyl-5-(diphosphooxymethyl)pyrimidine + H(+) = thiamine phosphate + diphosphate. The protein operates within cofactor biosynthesis; thiamine diphosphate biosynthesis; thiamine phosphate from 4-amino-2-methyl-5-diphosphomethylpyrimidine and 4-methyl-5-(2-phosphoethyl)-thiazole: step 1/1. In terms of biological role, condenses 4-methyl-5-(beta-hydroxyethyl)thiazole monophosphate (THZ-P) and 2-methyl-4-amino-5-hydroxymethyl pyrimidine pyrophosphate (HMP-PP) to form thiamine monophosphate (TMP). The sequence is that of Thiamine-phosphate synthase from Pyrococcus horikoshii (strain ATCC 700860 / DSM 12428 / JCM 9974 / NBRC 100139 / OT-3).